Consider the following 61-residue polypeptide: Bactericidin B-5P (61 aa).

Positions 1–22 (MNFSRVLFFVFACLSAFAMASA) are cleaved as a signal peptide. The propeptide at 23–24 (AP) is removed by a dipeptidylpeptidase. G60 carries the glycine amide modification.

Belongs to the cecropin family.

It is found in the secreted. Functionally, cecropins have lytic and antibacterial activity against several Gram-positive and Gram-negative bacteria. This is Bactericidin B-5P from Manduca sexta (Tobacco hawkmoth).